The following is a 248-amino-acid chain: Small ribosomal subunit protein eS6 (248 aa).

Residues 215 to 248 (VQRKKESKAKREEAKRRRSASIRESKSSVSSDKK) form a disordered region. Basic and acidic residues predominate over residues 223–248 (AKREEAKRRRSASIRESKSSVSSDKK). 6 positions are modified to phosphoserine: Ser233, Ser235, Ser239, Ser242, Ser244, and Ser245.

The protein belongs to the eukaryotic ribosomal protein eS6 family. As to quaternary structure, component of the small ribosomal subunit. Part of the small subunit (SSU) processome, composed of more than 70 proteins and the RNA chaperone small nucleolar RNA (snoRNA) U3. Post-translationally, ribosomal protein S6 is the major substrate of protein kinases in eukaryote ribosomes. The phosphorylation is stimulated by growth factors, tumor promoting agents, and mitogens. It is dephosphorylated at growth arrest.

It localises to the cytoplasm. The protein localises to the nucleus. Its subcellular location is the nucleolus. Component of the 40S small ribosomal subunit. Plays an important role in controlling cell growth and proliferation through the selective translation of particular classes of mRNA. Part of the small subunit (SSU) processome, first precursor of the small eukaryotic ribosomal subunit. During the assembly of the SSU processome in the nucleolus, many ribosome biogenesis factors, an RNA chaperone and ribosomal proteins associate with the nascent pre-rRNA and work in concert to generate RNA folding, modifications, rearrangements and cleavage as well as targeted degradation of pre-ribosomal RNA by the RNA exosome. In Drosophila melanogaster (Fruit fly), this protein is Small ribosomal subunit protein eS6 (RpS6).